The following is a 723-amino-acid chain: Solute carrier organic anion transporter family member 4A1 (723 aa).

Residues Met1 to Lys102 are Cytoplasmic-facing. The segment at Ser23–Lys64 is disordered. A compositionally biased stretch (low complexity) spans Pro33–Ala46. A phosphoserine mark is found at Ser39, Ser42, and Ser45. Residues Gly103 to Ile123 form a helical membrane-spanning segment. Over Asn124 to Gly142 the chain is Extracellular. The helical transmembrane segment at Leu143 to Gly163 threads the bilayer. At Gly164 to Pro169 the chain is on the cytoplasmic side. The chain crosses the membrane as a helical span at residues Arg170 to Gly194. The Extracellular segment spans residues Arg195–Gly224. The N-linked (GlcNAc...) asparagine glycan is linked to Asn212. A helical transmembrane segment spans residues Leu225–Asp255. Over Glu256–Ala274 the chain is Cytoplasmic. The helical transmembrane segment at Ile275–Val295 threads the bilayer. At Gly296–Val309 the chain is on the extracellular side. A helical transmembrane segment spans residues Gly310–Pro334. Residues Arg335–Leu380 are Cytoplasmic-facing. The chain crosses the membrane as a helical span at residues Leu381–Ala402. Residues Gly403 to Glu422 are Extracellular-facing. The chain crosses the membrane as a helical span at residues Ala423–Val446. At Asn447–Lys450 the chain is on the cytoplasmic side. Residues Leu451–Val473 traverse the membrane as a helical segment. The Extracellular segment spans residues Phe474–Leu582. A Kazal-like domain is found at Leu500–Leu557. Disulfide bonds link Cys506–Cys536 and Cys521–Cys555. An N-linked (GlcNAc...) asparagine glycan is attached at Asn566. A helical membrane pass occupies residues Leu583–Leu605. The Cytoplasmic portion of the chain corresponds to Arg606–Ser614. Residues Phe615–Ile640 form a helical membrane-spanning segment. Over Asp641–Gly673 the chain is Extracellular. The chain crosses the membrane as a helical span at residues Leu674–Tyr691. Residues Lys692–Val723 lie on the Cytoplasmic side of the membrane. The tract at residues Gly700–Val723 is disordered. Residues Leu701–Val723 are compositionally biased toward low complexity.

Belongs to the organo anion transporter (TC 2.A.60) family.

It is found in the cell membrane. It carries out the reaction 3,3',5-triiodo-L-thyronine(out) + L-glutamate(in) = 3,3',5-triiodo-L-thyronine(in) + L-glutamate(out). It catalyses the reaction L-thyroxine(out) + L-glutamate(in) = L-thyroxine(in) + L-glutamate(out). The catalysed reaction is estrone 3-sulfate(out) + L-glutamate(in) = estrone 3-sulfate(in) + L-glutamate(out). The enzyme catalyses taurocholate(out) + L-glutamate(in) = taurocholate(in) + L-glutamate(out). It carries out the reaction 3,3',5-triiodo-L-thyronine(out) = 3,3',5-triiodo-L-thyronine(in). It catalyses the reaction L-thyroxine(out) = L-thyroxine(in). The catalysed reaction is 3,3',5'-triiodo-L-thyronine(out) = 3,3',5'-triiodo-L-thyronine(in). The enzyme catalyses estrone 3-sulfate(out) = estrone 3-sulfate(in). It carries out the reaction 17beta-estradiol 17-O-(beta-D-glucuronate)(out) = 17beta-estradiol 17-O-(beta-D-glucuronate)(in). It catalyses the reaction taurocholate(out) = taurocholate(in). The catalysed reaction is prostaglandin E2(out) = prostaglandin E2(in). Functionally, organic anion antiporter with apparent broad substrate specificity. Recognizes various substrates including thyroid hormones 3,3',5-triiodo-L-thyronine (T3), L-thyroxine (T4) and 3,3',5'-triiodo-L-thyronine (rT3), conjugated steroids such as estrone 3-sulfate and estradiol 17-beta glucuronide, bile acids such as taurocholate and prostanoids such as prostaglandin E2, likely operating in a tissue-specific manner. May be involved in uptake of metabolites from the circulation into organs such as kidney, liver or placenta. Possibly drives the selective transport of thyroid hormones and estrogens coupled to an outward glutamate gradient across the microvillous membrane of the placenta. The transport mechanism, its electrogenicity and potential tissue-specific counterions remain to be elucidated. This Mus musculus (Mouse) protein is Solute carrier organic anion transporter family member 4A1 (Slco4a1).